Here is a 357-residue protein sequence, read N- to C-terminus: DNA replication and repair protein RecF (357 aa).

30 to 37 (GANGSGKT) serves as a coordination point for ATP.

It belongs to the RecF family.

The protein localises to the cytoplasm. Functionally, the RecF protein is involved in DNA metabolism; it is required for DNA replication and normal SOS inducibility. RecF binds preferentially to single-stranded, linear DNA. It also seems to bind ATP. The sequence is that of DNA replication and repair protein RecF from Shigella boydii serotype 4 (strain Sb227).